The chain runs to 344 residues: MDIFREIASSMKGKNVFISPASISSVLTILYYGANGSTAEQLSKYVEKEENMDKVSAQNISFKSMNKVYGRYSAVFKDSFLGKIGDKFQTVDFTDCRTIDAINKCVDIFTEGKINPLLDEPLSPDTCLLAISAVYFKAKWLMPFEKEFTSDYPFYVSPTEMVDVSMMSIYGEPFNHASVKESFGNFSIIELPYVGDTSMMVILPNKIDGLESIEQNLTDTNFKKWCNSLKATFIDVHIPKFKVIGSYNLVDTLIKLGLTDVFYSTGDYINMCNSDVSVDAMIHKTYIDVNEEYTEAAAATSVLVADCASTVTNEFCADHPFIYVIRHVDGKILFVGRYCSPTTN.

The protein belongs to the serpin family. Poxviruses subfamily.

It localises to the host cytoplasm. In terms of biological role, viral serpin that inhibits both cysteine and serine proteinases involved in the regulation of host inflammatory and apoptosis processes. Major anti-apoptotic protein which inhibits both intrinsic and extrinsic pathways and strongly cleaves host CASP1 and CASP8 but is a rather poor inhibitor of host CASP3. Prevents the proteolytic activity of host interleukin-1-beta converting enzyme (ICE) and ICE-like enzymes. Can also block apoptosis through host tumor necrosis factor (TNF) receptor. The inhibition of host ICE is an example of a 'cross-class' interaction, in which a serpin inhibits a non-serine proteinase. Also inhibits granzyme B. In Cynomys gunnisoni (Gunnison's prairie dog), this protein is Serine proteinase inhibitor 2 (OPG199).